The following is a 524-amino-acid chain: Cytochrome P450 704B1 (524 aa).

The chain crosses the membrane as a helical span at residues 2 to 22 (SLCLVIACMVTSWIFLHRWGQ). Cys-471 contributes to the heme binding site.

It belongs to the cytochrome P450 family. Requires heme as cofactor.

It localises to the membrane. The enzyme catalyses an omega-methyl-long-chain fatty acid + reduced [NADPH--hemoprotein reductase] + O2 = an omega-hydroxy-long-chain fatty acid + oxidized [NADPH--hemoprotein reductase] + H2O + H(+). Involved in pollen wall development. Catalyzes the conversion of long-chain fatty acids to the corresponding omega-hydroxylated fatty acids. Omega-hydroxylated fatty acids, together with in-chain hydroxylated fatty acids, are key monomeric aliphatic building blocks for sporopollenin synthesis during exine formation. The polypeptide is Cytochrome P450 704B1 (CYP704B1) (Arabidopsis thaliana (Mouse-ear cress)).